A 427-amino-acid polypeptide reads, in one-letter code: 3-phosphoshikimate 1-carboxyvinyltransferase (427 aa).

Lys-20 lines the phosphoenolpyruvate pocket. Ser-21 and Arg-25 together coordinate 3-phosphoshikimate. Phosphoenolpyruvate contacts are provided by Gly-92 and Arg-120. Positions 166, 167, 168, 312, and 339 each coordinate 3-phosphoshikimate. Gln-168 serves as a coordination point for phosphoenolpyruvate. Asp-312 (proton acceptor) is an active-site residue. Residues Arg-343 and Arg-385 each contribute to the phosphoenolpyruvate site.

In terms of assembly, homotetramer.

Its subcellular location is the cytoplasm. It catalyses the reaction 3-phosphoshikimate + phosphoenolpyruvate = 5-O-(1-carboxyvinyl)-3-phosphoshikimate + phosphate. It participates in metabolic intermediate biosynthesis; chorismate biosynthesis; chorismate from D-erythrose 4-phosphate and phosphoenolpyruvate: step 6/7. Its activity is regulated as follows. Competitively inhibited by glyphosate. Activated by ammonium, rubidium or potassium ions. Functionally, catalyzes the transfer of the enolpyruvyl moiety of phosphoenolpyruvate (PEP) to the 5-hydroxyl of shikimate-3-phosphate (S3P) to produce enolpyruvyl shikimate-3-phosphate and inorganic phosphate. This is 3-phosphoshikimate 1-carboxyvinyltransferase from Streptococcus pneumoniae serotype 4 (strain ATCC BAA-334 / TIGR4).